Here is a 539-residue protein sequence, read N- to C-terminus: Phosphoenolpyruvate carboxykinase (ATP) (539 aa).

Substrate-binding residues include Arg64, Tyr206, and Lys212. ATP is bound by residues Lys212, His231, and 247 to 255; that span reads GLSGTGKTT. Residues Lys212 and His231 each contribute to the Mn(2+) site. Asp268 provides a ligand contact to Mn(2+). Residues Glu296, Arg332, 448-449, and Thr454 contribute to the ATP site; that span reads RI. Arg332 is a substrate binding site.

Belongs to the phosphoenolpyruvate carboxykinase (ATP) family. In terms of assembly, monomer. Mn(2+) is required as a cofactor.

It is found in the cytoplasm. It carries out the reaction oxaloacetate + ATP = phosphoenolpyruvate + ADP + CO2. It functions in the pathway carbohydrate biosynthesis; gluconeogenesis. Functionally, involved in the gluconeogenesis. Catalyzes the conversion of oxaloacetate (OAA) to phosphoenolpyruvate (PEP) through direct phosphoryl transfer between the nucleoside triphosphate and OAA. The chain is Phosphoenolpyruvate carboxykinase (ATP) from Yersinia enterocolitica serotype O:8 / biotype 1B (strain NCTC 13174 / 8081).